We begin with the raw amino-acid sequence, 353 residues long: 3'(2'),5'-bisphosphate nucleotidase (353 aa).

Asp50 (proton acceptor) is an active-site residue. Mg(2+)-binding residues include Glu73, Asp136, Ile138, and Asp139. The active-site Proton acceptor is Thr141. Adenosine 3',5'-bisphosphate is bound by residues Thr141, His232, Ser256, Lys259, Arg273, and Asp286. AMP contacts are provided by His232, Ser256, Lys259, Arg273, and Asp286. Asp286 lines the Mg(2+) pocket.

The protein belongs to the inositol monophosphatase superfamily. The cofactor is Mg(2+).

It catalyses the reaction 3'-phosphoadenylyl sulfate + H2O = adenosine 5'-phosphosulfate + phosphate. The catalysed reaction is adenosine 3',5'-bisphosphate + H2O = AMP + phosphate. It carries out the reaction adenosine 2',5'-bisphosphate + H2O = AMP + phosphate. The enzyme catalyses 1D-myo-inositol 1,4-bisphosphate + H2O = 1D-myo-inositol 4-phosphate + phosphate. It catalyses the reaction 1D-myo-inositol 1,3,4-trisphosphate + H2O = 1D-myo-inositol 3,4-bisphosphate + phosphate. With respect to regulation, inhibited by Li(+) and Na(+). In terms of biological role, phosphatase that converts adenosine 3'-phosphate 5'-phosphosulfate (PAPS) to adenosine 5'-phosphosulfate (APS) and 3'(2')-phosphoadenosine 5'-phosphate (PAP) to AMP. May regulate the flux of sulfur in the sulfur-activation pathway by converting PAPS to APS. Is also able to hydrolyze inositol 1,4-bisphosphate (Ins(1,4)P2) and inositol 1,3,4-trisphosphate (Ins(1,3,4)P3), but is not active on inositol 1,4,5-trisphosphate, inositol 1-phosphate, fructose 1,6-bisphosphate, AMP and ATP. Confers resistance to lithium. The polypeptide is 3'(2'),5'-bisphosphate nucleotidase (tol1) (Schizosaccharomyces pombe (strain 972 / ATCC 24843) (Fission yeast)).